A 173-amino-acid chain; its full sequence is Glutamyl-tRNA(Gln) amidotransferase subunit F, mitochondrial (173 aa).

The N-terminal 15 residues, 1 to 15 (MSRFMIRAVFFRRYT), are a transit peptide targeting the mitochondrion.

The protein belongs to the GatF family. As to quaternary structure, subunit of the heterotrimeric GatFAB amidotransferase (AdT) complex, composed of A, B and F subunits.

It is found in the mitochondrion inner membrane. The enzyme catalyses L-glutamyl-tRNA(Gln) + L-glutamine + ATP + H2O = L-glutaminyl-tRNA(Gln) + L-glutamate + ADP + phosphate + H(+). In terms of biological role, allows the formation of correctly charged Gln-tRNA(Gln) through the transamidation of misacylated Glu-tRNA(Gln) in the mitochondria. The reaction takes place in the presence of glutamine and ATP through an activated gamma-phospho-Glu-tRNA(Gln). Required for proper protein synthesis within the mitochondrion. The protein is Glutamyl-tRNA(Gln) amidotransferase subunit F, mitochondrial of Candida glabrata (strain ATCC 2001 / BCRC 20586 / JCM 3761 / NBRC 0622 / NRRL Y-65 / CBS 138) (Yeast).